We begin with the raw amino-acid sequence, 370 residues long: A-type ATP synthase subunit C (370 aa).

The protein belongs to the V-ATPase V0D/AC39 subunit family. Has multiple subunits with at least A(3), B(3), C, D, E, F, H, I and proteolipid K(x).

Its subcellular location is the cell membrane. Component of the A-type ATP synthase that produces ATP from ADP in the presence of a proton gradient across the membrane. The polypeptide is A-type ATP synthase subunit C (Pyrococcus abyssi (strain GE5 / Orsay)).